A 333-amino-acid polypeptide reads, in one-letter code: UDP-N-acetylenolpyruvoylglucosamine reductase (333 aa).

An FAD-binding PCMH-type domain is found at 12 to 176 (LPAQCRALIE…TSVVFRLPKD (165 aa)). Residue R153 is part of the active site. Residue S221 is the Proton donor of the active site. The active site involves E317.

The protein belongs to the MurB family. Requires FAD as cofactor.

It is found in the cytoplasm. It catalyses the reaction UDP-N-acetyl-alpha-D-muramate + NADP(+) = UDP-N-acetyl-3-O-(1-carboxyvinyl)-alpha-D-glucosamine + NADPH + H(+). It functions in the pathway cell wall biogenesis; peptidoglycan biosynthesis. In terms of biological role, cell wall formation. In Idiomarina loihiensis (strain ATCC BAA-735 / DSM 15497 / L2-TR), this protein is UDP-N-acetylenolpyruvoylglucosamine reductase.